Here is a 798-residue protein sequence, read N- to C-terminus: Probable G-protein coupled receptor 156 (798 aa).

At 1–49 the chain is on the extracellular side; the sequence is MEPEINCSEFCDSFPGQELDRRPLHDLCKTTITESQHSSTAASPLSPAL. A glycan (N-linked (GlcNAc...) asparagine) is linked at Asn-6. Residues 50–70 traverse the membrane as a helical segment; the sequence is LGIMWTFLSCGLLLVLFFLAF. Topologically, residues 71–86 are cytoplasmic; it reads TIRCRKNRIVKMSSPN. Residues 87-107 traverse the membrane as a helical segment; it reads LNVVTLLGSCLTYISAYLFGI. Residues 108–118 lie on the Extracellular side of the membrane; it reads QDALEGSSVEA. A helical transmembrane segment spans residues 119–139; that stretch reads LIQTRLSLLCIGTSLVFGPIL. At 140-164 the chain is on the cytoplasmic side; sequence GKSWRLYKVFTQRVPDKRVIIKDLQ. The chain crosses the membrane as a helical span at residues 165–185; it reads LLGLVAALVVADVILLVTWVL. At 186–222 the chain is on the extracellular side; sequence TDPIQCLQMLGVSMKVTGRDVSCSLTNTHFCASRYSD. Residues 223–243 form a helical membrane-spanning segment; that stretch reads VWIALVLGCKGLLLLYGAYLA. The Cytoplasmic segment spans residues 244-257; it reads GLTNHVSSPPVNQS. A helical membrane pass occupies residues 258–278; sequence LTIMVGVNLLLLTAGLLFVVT. Over 279–288 the chain is Extracellular; it reads RYLHSWPNLV. A helical transmembrane segment spans residues 289-309; the sequence is FGLTSGGIFVCTTTVNCCVFI. Residues 310–798 lie on the Cytoplasmic side of the membrane; it reads PQLKQWKAFE…FKDDLKPTLV (489 aa). The stretch at 353-390 forms a coiled coil; the sequence is DEKSCMERLLTEKNAVIESLQEQVSNAKEKLVKLMSAE. 3 disordered regions span residues 441-497, 546-666, and 693-715; these read HVQG…PMAP, SEAP…KQCE, and PAAPCLPSSPALPRQRQPRPRLS. Basic and acidic residues predominate over residues 479–492; it reads PKAEQSEGPERGDQ. Positions 559–572 are enriched in polar residues; sequence LWKSTTSRSPQKLS. The span at 583–594 shows a compositional bias: basic residues; sequence VRRRRAAQRARS. The segment covering 606-624 has biased composition (polar residues); that stretch reads HQANSTVSSSQSGLIVQNR. Residues 639 to 648 are compositionally biased toward low complexity; sequence PRSSSVKPSP.

It belongs to the G-protein coupled receptor 3 family. GABA-B receptor subfamily. In terms of tissue distribution, expressed in the outer and inner hair cells of the organ of Corti (at protein level). Expressed in the utricle and saccule within the vestibule (at protein level).

The protein localises to the cell membrane. The protein resides in the postsynaptic cell membrane. Its function is as follows. Orphan G-protein coupled receptor involved in the regulation of hair cell orientation in mechanosensory organs of the inner ear. It is required to trigger a 180 degree reversal in hair cell orientation, creating a virtual line of polarity reversal (LPR) across which stereociliary bundles are arranged in opposite orientations. The chain is Probable G-protein coupled receptor 156 (Gpr156) from Mus musculus (Mouse).